The following is a 534-amino-acid chain: ATP synthase subunit beta 2 (534 aa).

Residues M1–T10 show a composition bias toward polar residues. The segment at M1–D30 is disordered. G185–T192 contributes to the ATP binding site. The segment covering A494 to A505 has biased composition (basic and acidic residues). The disordered stretch occupies residues A494–R534.

It belongs to the ATPase alpha/beta chains family. In terms of assembly, F-type ATPases have 2 components, CF(1) - the catalytic core - and CF(0) - the membrane proton channel. CF(1) has five subunits: alpha(3), beta(3), gamma(1), delta(1), epsilon(1). CF(0) has three main subunits: a(1), b(2) and c(9-12). The alpha and beta chains form an alternating ring which encloses part of the gamma chain. CF(1) is attached to CF(0) by a central stalk formed by the gamma and epsilon chains, while a peripheral stalk is formed by the delta and b chains.

The protein localises to the cell inner membrane. The catalysed reaction is ATP + H2O + 4 H(+)(in) = ADP + phosphate + 5 H(+)(out). Produces ATP from ADP in the presence of a proton gradient across the membrane. The catalytic sites are hosted primarily by the beta subunits. The polypeptide is ATP synthase subunit beta 2 (Burkholderia pseudomallei (strain 668)).